The sequence spans 465 residues: MKAAVRSKKSKGSFCHPPLLLLIVAIQFLVIYSPTLDQYMVMLTTGKPGFPSMLIDGRRSFKQVDEFIPEPHLRCDFRDNRSDVCEMEGAIRILGRTSEVFLVAPSLASISGGGGGVNATGVDANATRWKIQPYTRKGESRVMPGITEVTVRLVTADEAPPCDEWHDVPAIVYSNGGYCGNYYHDFNDNIIPLFITSRHLAGEVQLLVTQKQRWWFGKYREIVEGLTKYEPVDLDAEQRVRCYRRATVGLHSHKDLSIDPRRAPNNYSMVDFKRFLMWRYALPREHAIRMEEEDKSKKPRLLVINRRSRRRFVNLDEIVAAAEGVGFEVAAAELDAHIPAAASAVNSYDAMVAVHGSGLTNLVFLPMNAVVIQVVPLGRMEGLAMDEYGVPPRDMNMRYLQYNITAEESTLSEVYPRAHPVFLDPLPIHKQSWSLVKDIYLGQQDVRLDVRRFRPVLLKALHLLR.

Topologically, residues 1-11 are cytoplasmic; it reads MKAAVRSKKSK. Residues 12–32 form a helical; Signal-anchor for type II membrane protein membrane-spanning segment; it reads GSFCHPPLLLLIVAIQFLVIY. Over 33 to 465 the chain is Lumenal; the sequence is SPTLDQYMVM…VLLKALHLLR (433 aa). N-linked (GlcNAc...) asparagine glycans are attached at residues N80, N118, N125, N266, and N403.

This sequence belongs to the glycosyltransferase 61 family. In terms of tissue distribution, widely expressed.

The protein localises to the golgi apparatus membrane. Its pathway is glycan metabolism. Glycosyltransferase involved in the xylosylation of xylan, the major hemicellulose (non-cellulosic component) of primary and secondary walls of angiosperms. Possesses beta-1,2-xylosyltransferase activity, transferring xylose from UDP-xylose to the xylan backbone. Catalyzes the addition of 2-O-xylosyl side chains to the xylan backbone. This chain is Beta-1,2-xylosyltransferase XYXT1, found in Oryza sativa subsp. japonica (Rice).